Consider the following 530-residue polypeptide: Calcium-dependent protein kinase 14 (530 aa).

A lipid anchor (N-myristoyl glycine) is attached at Gly2. The region spanning 54 to 312 (YKLGRELGRG…AQQVLDHPWI (259 aa)) is the Protein kinase domain. Residues 60–68 (LGRGEFGVT) and Lys83 contribute to the ATP site. Asp178 functions as the Proton acceptor in the catalytic mechanism. Position 218 is a phosphoserine (Ser218). The interval 318-348 (ASNVSLGETVRARLKQFSVMNKLKKRALRVI) is autoinhibitory domain. 4 consecutive EF-hand domains span residues 355-390 (EETS…LGIV), 391-426 (VPQD…IRKL), 427-462 (GNDE…DVDT), and 463-498 (TSEE…GTDW). Ca(2+)-binding residues include Asp368, Ser370, Lys374, Glu379, Asp404, Asp406, Asp408, Tyr410, Glu415, Asp440, Asn442, Ser444, Tyr446, Glu451, Asp476, Asn478, Asp480, and Lys482. Ser484 carries the post-translational modification Phosphoserine. Glu487 is a binding site for Ca(2+).

This sequence belongs to the protein kinase superfamily. Ser/Thr protein kinase family. CDPK subfamily.

The protein localises to the membrane. The catalysed reaction is L-seryl-[protein] + ATP = O-phospho-L-seryl-[protein] + ADP + H(+). It carries out the reaction L-threonyl-[protein] + ATP = O-phospho-L-threonyl-[protein] + ADP + H(+). Activated by calcium. Autophosphorylation may play an important role in the regulation of the kinase activity. Its function is as follows. May play a role in signal transduction pathways that involve calcium as a second messenger. This Arabidopsis thaliana (Mouse-ear cress) protein is Calcium-dependent protein kinase 14 (CPK14).